The chain runs to 999 residues: Embryonic polarity protein dorsal (999 aa).

Positions 1–44 are disordered; the sequence is MFPNQNNGAAPGQGPAVDGQQSLNYNGLPAQQQQQLAQSTKNVR. The RHD domain occupies 47–342; sequence PYVKITEQPA…TFWNLHRHLK (296 aa). Phosphoserine; by PKA is present on S312. Disordered regions lie at residues 389 to 424 and 670 to 851; these read FNHE…EQYT and QARK…SVSG. Low complexity predominate over residues 402 to 424; that stretch reads EQEQSVQQEQYTQEQSLQQEQYT. A Nuclear export signal motif is present at residues 668–677; that stretch reads NSQARKPETP. Residues 677 to 686 show a composition bias toward pro residues; the sequence is PMRPVPPVPP. Basic and acidic residues predominate over residues 710 to 719; the sequence is KQDSNAENRS. Over residues 720–734 the composition is skewed to polar residues; the sequence is IEANTVQTKPSTGES. A Nuclear localization signal motif is present at residues 756–773; sequence KKPGFFSKLFSRRKSKPD. Low complexity-rich tracts occupy residues 819–829 and 836–851; these read SNPAPAKSSPV and SKLT…SVSG.

Interacts with tamo via the nuclear localization signal. Interacts with emb, a component of the nuclear export complex. In unchallenged larvae, expression of both isoforms is seen in fat body and gut (isoform A is more abundant). After immune challenge levels of both isoforms are enhanced.

It localises to the cytoplasm. It is found in the nucleus. In terms of biological role, embryonic developmental transcription factor. The lateral or ventral identity of a cell depends upon the concentration of this protein in its nucleus during the blastoderm stage. Acts as a morphogenetic transcription factor that specifically binds to the kappa-B-related consensus sequence 5'-GRGAAAANCC-3', located in the enhancer region of zygotic genes such as Zen, Twist, Snail and Decapentaplegic, promoting their expression. Part of a signaling pathway involving NF-kappa-B and Toll-related receptors, that functions in the apoptosis of unfit cells during cell competition. Mediates an immune response in larvae. May be part of a NF-kappa-B and Tollo signaling cascade that regulates development of the peripheral nervous system. The sequence is that of Embryonic polarity protein dorsal (dl) from Drosophila melanogaster (Fruit fly).